A 332-amino-acid polypeptide reads, in one-letter code: Glycerol-3-phosphate dehydrogenase [NAD(P)+] (332 aa).

Residues Trp11, Arg30, and Lys108 each coordinate NADPH. Residues Lys108, Gly137, and Ser139 each coordinate sn-glycerol 3-phosphate. Ala141 provides a ligand contact to NADPH. 5 residues coordinate sn-glycerol 3-phosphate: Lys192, Asp245, Ser255, Arg256, and Asn257. Lys192 acts as the Proton acceptor in catalysis. Arg256 is an NADPH binding site. Val280 and Glu282 together coordinate NADPH.

The protein belongs to the NAD-dependent glycerol-3-phosphate dehydrogenase family.

The protein resides in the cytoplasm. It catalyses the reaction sn-glycerol 3-phosphate + NAD(+) = dihydroxyacetone phosphate + NADH + H(+). It carries out the reaction sn-glycerol 3-phosphate + NADP(+) = dihydroxyacetone phosphate + NADPH + H(+). It functions in the pathway membrane lipid metabolism; glycerophospholipid metabolism. Functionally, catalyzes the reduction of the glycolytic intermediate dihydroxyacetone phosphate (DHAP) to sn-glycerol 3-phosphate (G3P), the key precursor for phospholipid synthesis. The chain is Glycerol-3-phosphate dehydrogenase [NAD(P)+] from Burkholderia orbicola (strain AU 1054).